The following is a 441-amino-acid chain: Ribulose bisphosphate carboxylase large chain (441 aa).

Lys-5 carries the post-translational modification N6,N6,N6-trimethyllysine. Residues Asn-114 and Thr-164 each coordinate substrate. Lys-166 serves as the catalytic Proton acceptor. Residue Lys-168 coordinates substrate. Mg(2+)-binding residues include Lys-192, Asp-194, and Glu-195. Residue Lys-192 is modified to N6-carboxylysine. His-285 functions as the Proton acceptor in the catalytic mechanism. Residues Arg-286, His-318, and Ser-370 each coordinate substrate.

Belongs to the RuBisCO large chain family. Type I subfamily. As to quaternary structure, heterohexadecamer of 8 large chains and 8 small chains; disulfide-linked. The disulfide link is formed within the large subunit homodimers. Mg(2+) is required as a cofactor. The disulfide bond which can form in the large chain dimeric partners within the hexadecamer appears to be associated with oxidative stress and protein turnover.

It is found in the plastid. The protein localises to the chloroplast. It carries out the reaction 2 (2R)-3-phosphoglycerate + 2 H(+) = D-ribulose 1,5-bisphosphate + CO2 + H2O. The enzyme catalyses D-ribulose 1,5-bisphosphate + O2 = 2-phosphoglycolate + (2R)-3-phosphoglycerate + 2 H(+). In terms of biological role, ruBisCO catalyzes two reactions: the carboxylation of D-ribulose 1,5-bisphosphate, the primary event in carbon dioxide fixation, as well as the oxidative fragmentation of the pentose substrate in the photorespiration process. Both reactions occur simultaneously and in competition at the same active site. In Drosera petiolaris (Woolly sundew), this protein is Ribulose bisphosphate carboxylase large chain.